The sequence spans 110 residues: Iron-sulfur cluster assembly protein CyaY (110 aa).

It belongs to the frataxin family.

Functionally, involved in iron-sulfur (Fe-S) cluster assembly. May act as a regulator of Fe-S biogenesis. This Pseudomonas putida (strain W619) protein is Iron-sulfur cluster assembly protein CyaY.